The following is a 290-amino-acid chain: Acetyl-coenzyme A carboxylase carboxyl transferase subunit beta (290 aa).

Residues 29 to 290 (LWGKCPECSQ…RLHGYREKRK (262 aa)) enclose the CoA carboxyltransferase N-terminal domain. Positions 33, 36, 52, and 55 each coordinate Zn(2+). A C4-type zinc finger spans residues 33-55 (CPECSQVVYRKDLLENANVCSNC).

This sequence belongs to the AccD/PCCB family. In terms of assembly, acetyl-CoA carboxylase is a heterohexamer composed of biotin carboxyl carrier protein (AccB), biotin carboxylase (AccC) and two subunits each of ACCase subunit alpha (AccA) and ACCase subunit beta (AccD). It depends on Zn(2+) as a cofactor.

The protein resides in the cytoplasm. The catalysed reaction is N(6)-carboxybiotinyl-L-lysyl-[protein] + acetyl-CoA = N(6)-biotinyl-L-lysyl-[protein] + malonyl-CoA. The protein operates within lipid metabolism; malonyl-CoA biosynthesis; malonyl-CoA from acetyl-CoA: step 1/1. Its function is as follows. Component of the acetyl coenzyme A carboxylase (ACC) complex. Biotin carboxylase (BC) catalyzes the carboxylation of biotin on its carrier protein (BCCP) and then the CO(2) group is transferred by the transcarboxylase to acetyl-CoA to form malonyl-CoA. The chain is Acetyl-coenzyme A carboxylase carboxyl transferase subunit beta from Prochlorococcus marinus (strain MIT 9211).